A 259-amino-acid chain; its full sequence is Imidazole glycerol phosphate synthase subunit HisF (259 aa).

Residues D11 and D130 contribute to the active site.

It belongs to the HisA/HisF family. In terms of assembly, heterodimer of HisH and HisF.

It is found in the cytoplasm. The enzyme catalyses 5-[(5-phospho-1-deoxy-D-ribulos-1-ylimino)methylamino]-1-(5-phospho-beta-D-ribosyl)imidazole-4-carboxamide + L-glutamine = D-erythro-1-(imidazol-4-yl)glycerol 3-phosphate + 5-amino-1-(5-phospho-beta-D-ribosyl)imidazole-4-carboxamide + L-glutamate + H(+). It participates in amino-acid biosynthesis; L-histidine biosynthesis; L-histidine from 5-phospho-alpha-D-ribose 1-diphosphate: step 5/9. IGPS catalyzes the conversion of PRFAR and glutamine to IGP, AICAR and glutamate. The HisF subunit catalyzes the cyclization activity that produces IGP and AICAR from PRFAR using the ammonia provided by the HisH subunit. The chain is Imidazole glycerol phosphate synthase subunit HisF from Lactococcus lactis subsp. cremoris (strain SK11).